A 231-amino-acid chain; its full sequence is MKVVIVTSVASLLDASIQFQKTACRHHCNYLSMQVVKEIEEFGTINEKNLEFDTWKDVIQNDEIDALVFYRVKQISISTGVLYKSMMRNRTKPISMYFVRDCLAFDGDPPSFRMTSCNINAYNRSKIKDLIILMNMKTCNKKIIGEFIIDNFGSVDALLSIINSNVTWITSVINNSNGRGINIRVSNNKMLTITSFRRFVNKLKMYKTTKCASQLDNLCTEMNKMDIIDKK.

Belongs to the orthopoxvirus OPG058 family.

The protein resides in the host nucleus. It is found in the host nucleolus. The chain is Protein OPG061 (OPG061) from Vaccinia virus (strain Western Reserve) (VACV).